The chain runs to 416 residues: Formyl-CoA:oxalate CoA-transferase (416 aa).

Residues 17–18 (QS), R38, 72–75 (LNTK), 96–98 (NFH), H104, and 137–140 (KAYE) each bind CoA. Residue D169 is the Nucleophile of the active site. 248–250 (GGQ) serves as a coordination point for substrate. A CoA-binding site is contributed by 273–275 (QEQ).

It belongs to the CoA-transferase III family. Frc subfamily. As to quaternary structure, homodimer.

It carries out the reaction formyl-CoA + oxalate = oxalyl-CoA + formate. It functions in the pathway metabolic intermediate degradation; oxalate degradation; CO(2) and formate from oxalate: step 1/2. Functionally, involved in the catabolism of oxalate and in the adapatation to low pH via the induction of the oxalate-dependent acid tolerance response (ATR). Catalyzes the transfer of the CoA moiety from formyl-CoA to oxalate. The sequence is that of Formyl-CoA:oxalate CoA-transferase from Escherichia coli O17:K52:H18 (strain UMN026 / ExPEC).